Here is a 184-residue protein sequence, read N- to C-terminus: FMRFamide-related peptides (184 aa).

Positions 1 to 44 (MLVSSSVLKDDSSLRIFKESPNEFEYIIKRHDMDDRKEDTESKE) are excised as a propeptide. Phe-56 is modified (phenylalanine amide). A propeptide spanning residues 59–83 (GQSFFNNLDNSAFDNEIDSKVSRHP) is cleaved from the precursor. Position 94 is a phenylalanine amide (Phe-94). A propeptide spanning residues 97-107 (SGMKSTNDEQP) is cleaved from the precursor. Phe-119 carries the phenylalanine amide modification. A propeptide spanning residues 122–184 (NIQIVPTDFD…SLETNSNHRE (63 aa)) is cleaved from the precursor.

Belongs to the FARP (FMRFamide related peptide) family. In terms of tissue distribution, expressed throughout the central nervous system.

The protein resides in the secreted. Its function is as follows. In insects, FMRFamide and related peptides have modulatory actions at skeletal neuromuscular junctions, and peptides that are immunologically related to FMRFamide are released into the circulation from neurohemal organs. The protein is FMRFamide-related peptides of Camponotus floridanus (Florida carpenter ant).